The chain runs to 105 residues: Nitrogen fixation nifHD region GlnB-like protein 1 (105 aa).

It belongs to the P(II) protein family.

Functionally, could be involved in the regulation of nitrogen fixation. This is Nitrogen fixation nifHD region GlnB-like protein 1 (glnBA) from Methanothermobacter marburgensis (strain ATCC BAA-927 / DSM 2133 / JCM 14651 / NBRC 100331 / OCM 82 / Marburg) (Methanobacterium thermoautotrophicum).